We begin with the raw amino-acid sequence, 408 residues long: Tyrosine--tRNA ligase (408 aa).

A 'HIGH' region motif is present at residues 50 to 59 (PTGKDLTLGH). The 'KMSKS' region signature appears at 234 to 238 (KMSKS). ATP is bound at residue lysine 237. The S4 RNA-binding domain occupies 346 to 407 (MQAARVLFTA…GKRKYGRVVL (62 aa)).

This sequence belongs to the class-I aminoacyl-tRNA synthetase family. TyrS type 2 subfamily. Homodimer.

It localises to the cytoplasm. The catalysed reaction is tRNA(Tyr) + L-tyrosine + ATP = L-tyrosyl-tRNA(Tyr) + AMP + diphosphate + H(+). In terms of biological role, catalyzes the attachment of tyrosine to tRNA(Tyr) in a two-step reaction: tyrosine is first activated by ATP to form Tyr-AMP and then transferred to the acceptor end of tRNA(Tyr). The chain is Tyrosine--tRNA ligase from Symbiobacterium thermophilum (strain DSM 24528 / JCM 14929 / IAM 14863 / T).